Consider the following 336-residue polypeptide: MTHLNKKQRLENNHNNTVNNHFEDLHDDLIISILRKLATSASSPSDFLTVLSTCKRLNRLGLHPLVLSKAGTQTLAVTAEKWSDSSHKFLKLCVNAGNIDASYSLGMIRFYCLQNPVSGASLMAKAAIKSHAPALYSLSVIQFNGSGGSKTDKNLRAGVALCARSAYLGHVDALRELGHCLQDGYGVPRDVSEGRRLLIQANARELACSLRSYLSLKSGDENETLTDLSVVPVQEIHPVNRFLKEWFSSGRVDLAEGLRMCSHGGCGRPETRAHEFRRCSVCGKVNYCSRGCQALDWRAKHKVECTPLDLWVAAAAEIGDDGEAVAVEIDDNHGER.

Residues 19–70 form the F-box domain; sequence NNHFEDLHDDLIISILRKLATSASSPSDFLTVLSTCKRLNRLGLHPLVLSKA. The Zn(2+) site is built by His-263, Cys-266, Cys-279, Cys-282, Cys-288, Cys-292, His-301, and Cys-305. The MYND-type; atypical zinc-finger motif lies at 263–305; that stretch reads HGGCGRPETRAHEFRRCSVCGKVNYCSRGCQALDWRAKHKVEC.

The sequence is that of F-box protein At5g50450 from Arabidopsis thaliana (Mouse-ear cress).